Consider the following 220-residue polypeptide: Cytidylate kinase (220 aa).

9-17 (GPAASGKST) contributes to the ATP binding site.

It belongs to the cytidylate kinase family. Type 1 subfamily.

The protein localises to the cytoplasm. It carries out the reaction CMP + ATP = CDP + ADP. It catalyses the reaction dCMP + ATP = dCDP + ADP. The protein is Cytidylate kinase of Thermotoga maritima (strain ATCC 43589 / DSM 3109 / JCM 10099 / NBRC 100826 / MSB8).